The sequence spans 152 residues: Transcriptional repressor NrdR (152 aa).

A zinc finger lies at 3–34; it reads CPYCSYNESKVVDSRSTEDSISIRRRRECLEC. The region spanning 49–139 is the ATP-cone domain; sequence ILVIKKNLNR…VYRQFKDINT (91 aa).

This sequence belongs to the NrdR family. It depends on Zn(2+) as a cofactor.

In terms of biological role, negatively regulates transcription of bacterial ribonucleotide reductase nrd genes and operons by binding to NrdR-boxes. In Clostridium tetani (strain Massachusetts / E88), this protein is Transcriptional repressor NrdR.